The sequence spans 1022 residues: MLKLKGELRTAKGLKNEAGERDRDVSNLNSKLLSLQLDIKNLHDVCKRQGKTLQENQLCVEEAMLKANHNKKQAQTLVFTDNQMDFRVNKQYHLRQLQQLKKKLLTLQQELEFRTQELQASYCSLLQYQSILEKQTSDLLVLHRHCKLKEDEVILYEEEMGNHSKSTGEKLHLAQEQLALAGDKILSLERSLNLYRDKYQTSLSNIELLECQVKMLEGELSGLIGQDPENKGDHPKVRIYTSPCVIQEHQETLKRLSEVWQKVSEQDDLIQELRNKLACSNSLVLEREEALIKLQAEFASYTATHRHPPTSSEDCEDITKILKHLQEQKDSQCLHVEEYQNLVKDLRMELEAVSEQKKKIMKDMMKLELDLHGLREETSCVIEKKDKETVFLQYRLQDLQQQYTESQKLSLKKDKLLQDKDERLHELEKNLMQVQNSLREKEAELEKLQCTTKELDTSLQEARQSTSKIDCEALRAEIQKLKDSLEEAREQLKVSDQNLTQSKEEAHLSASSLEDAHRKIENCLLQDKQKEEVIKDLQSQLHKLQKESSKIEEERKHNRQRLQELSSELSEGQRRLSNAEKEKSLLQKTLDEDEKKIDELFHSTQVSEQKQRELTNSIRKLEEELLEIKGLLEEKREQLKKSKEQEKALEEEIEALRQEAKRKEKMAKEHLRKLDEEKENLQAELTSRSSHLDSSLNKYNSSQKVIQELNAEIARQKDSIMILQTQLDSAIQKEKNCFQNMVSKEAYEELVRKSGNCQDDLTQALEKLTQATSETKSLNRSLQQTQERKAQLEDEIAAYEERMKKLNMELKKLQGFQQQSEQEVHNFDKKLEEMSNQVLQWQRQHQSDLKMLAAKESQLREFQEEMATLRESLLADEKEPYSPPAKLTPKETCRHHRENDQIMNNVEQWAKEQKIANEKLGNKLREQVKYIAKLTGEKDHLHNVMVHLQQENKKLKNEIEEKKLKAGNPRICVKAFPPNKLEPSQKGKLCCALGWRGIPQDLTPKTDHKYMGLPHSSGSSYC.

Coiled coils occupy residues 89 to 121 (NKQY…LQAS), 169 to 281 (EKLH…ACSN), 312 to 377 (SEDC…LREE), 411 to 732 (LKKD…SAIQ), and 758 to 968 (QDDL…KAGN). Composition is skewed to basic and acidic residues over residues 545-556 (QKESSKIEEERK) and 571-582 (EGQRRLSNAEKE). The segment at 545-582 (QKESSKIEEERKHNRQRLQELSSELSEGQRRLSNAEKE) is disordered.

In terms of tissue distribution, expressed in the testis.

Its subcellular location is the cell projection. It is found in the cilium. The protein resides in the flagellum. Required for normal spermatogenesis. It functions as a scaffold protein that attaches the sperm head-tail connecting piece to the nuclear envelope, thus maintaining sperm head and tail integrity. May also be involved in the general organization of cellular cytoskeleton. The sequence is that of Polyamine-modulated factor 1-binding protein 1 (Pmfbp1) from Mus musculus (Mouse).